The following is a 467-amino-acid chain: Putative alpha-amylase (467 aa).

The active-site Nucleophile is the Glu-145.

Belongs to the glycosyl hydrolase 57 family.

The catalysed reaction is Endohydrolysis of (1-&gt;4)-alpha-D-glucosidic linkages in polysaccharides containing three or more (1-&gt;4)-alpha-linked D-glucose units.. This chain is Putative alpha-amylase, found in Methanocaldococcus jannaschii (strain ATCC 43067 / DSM 2661 / JAL-1 / JCM 10045 / NBRC 100440) (Methanococcus jannaschii).